Here is a 544-residue protein sequence, read N- to C-terminus: CTP synthase (544 aa).

Residues 1–266 (MKKRFIFITG…DQIICHHFKL (266 aa)) form an amidoligase domain region. Residue serine 14 coordinates CTP. Residue serine 14 participates in UTP binding. ATP is bound by residues 15–20 (SLGKGI) and aspartate 72. Residues aspartate 72 and glutamate 140 each contribute to the Mg(2+) site. CTP-binding positions include 147-149 (DIE), 187-192 (KTKPTQ), and lysine 223. UTP-binding positions include 187-192 (KTKPTQ) and lysine 223. The Glutamine amidotransferase type-1 domain maps to 291-541 (TIGIIGKYIK…IKAAIQYKKI (251 aa)). Glycine 352 provides a ligand contact to L-glutamine. Cysteine 379 functions as the Nucleophile; for glutamine hydrolysis in the catalytic mechanism. L-glutamine contacts are provided by residues 380-383 (LGMQ), glutamate 403, and arginine 469. Catalysis depends on residues histidine 514 and glutamate 516.

The protein belongs to the CTP synthase family. Homotetramer.

It carries out the reaction UTP + L-glutamine + ATP + H2O = CTP + L-glutamate + ADP + phosphate + 2 H(+). It catalyses the reaction L-glutamine + H2O = L-glutamate + NH4(+). The enzyme catalyses UTP + NH4(+) + ATP = CTP + ADP + phosphate + 2 H(+). Its pathway is pyrimidine metabolism; CTP biosynthesis via de novo pathway; CTP from UDP: step 2/2. With respect to regulation, allosterically activated by GTP, when glutamine is the substrate; GTP has no effect on the reaction when ammonia is the substrate. The allosteric effector GTP functions by stabilizing the protein conformation that binds the tetrahedral intermediate(s) formed during glutamine hydrolysis. Inhibited by the product CTP, via allosteric rather than competitive inhibition. Functionally, catalyzes the ATP-dependent amination of UTP to CTP with either L-glutamine or ammonia as the source of nitrogen. Regulates intracellular CTP levels through interactions with the four ribonucleotide triphosphates. The protein is CTP synthase of Buchnera aphidicola subsp. Baizongia pistaciae (strain Bp).